Consider the following 1233-residue polypeptide: Integrator complex subunit 4 homolog (1233 aa).

HEAT repeat units follow at residues 236-273 and 275-310; these read SLIN…NLDK and SEEI…RGAS. The segment at 426 to 473 is disordered; sequence RLQQKQQQQQQQQQQQQQQPPQQQPSQQPNQQPNQQQTNVSGTHIATP. The span at 428–462 shows a compositional bias: low complexity; the sequence is QQKQQQQQQQQQQQQQQPPQQQPSQQPNQQPNQQQ. 3 HEAT repeats span residues 487–524, 525–561, and 563–597; these read ILES…RNDE, FAQK…NVVI, and EEQL…SNYS. Low complexity predominate over residues 767 to 792; the sequence is NNNTNNNNNNNNNNNNNNNNNNNNNN. Disordered stretches follow at residues 767 to 796 and 993 to 1057; these read NNNT…DEND and DKKL…TTTT. The segment covering 1000–1013 has biased composition (acidic residues); it reads EENEENEENENNEN. The segment covering 1014-1030 has biased composition (basic and acidic residues); that stretch reads ENEKENGKNKEKEKNEN. Residues 1046–1057 are compositionally biased toward low complexity; that stretch reads KTTSELIKTTTT.

It belongs to the Integrator subunit 4 family. In terms of assembly, component of the Integrator complex. The core complex associates with protein phosphatase 2A subunits, to form the Integrator-PP2A (INTAC) complex.

The protein localises to the nucleus. It localises to the cytoplasm. Its function is as follows. Component of the integrator complex, a multiprotein complex that terminates RNA polymerase II (Pol II) transcription in the promoter-proximal region of genes. The integrator complex provides a quality checkpoint during transcription elongation by driving premature transcription termination of transcripts that are unfavorably configured for transcriptional elongation: the complex terminates transcription by (1) catalyzing dephosphorylation of the C-terminal domain (CTD) of Pol II subunit polr2a, (2) degrading the exiting nascent RNA transcript via endonuclease activity and (3) promoting the release of Pol II from bound DNA. The integrator complex is also involved in terminating the synthesis of non-coding Pol II transcripts, such as enhancer RNAs (eRNAs), small nuclear RNAs (snRNAs), telomerase RNAs and long non-coding RNAs (lncRNAs). The chain is Integrator complex subunit 4 homolog (ints4) from Dictyostelium discoideum (Social amoeba).